Reading from the N-terminus, the 236-residue chain is Lectin (236 aa).

An N-linked (GlcNAc...) asparagine glycan is attached at N118.

Belongs to the leguminous lectin family. In terms of assembly, homodimer of noncovalently associated chains.

Functionally, D-mannose and D-glucose specific lectin. This chain is Lectin, found in Onobrychis viciifolia (Common sainfoin).